The sequence spans 476 residues: uncharacterized protein (476 aa).

In terms of domain architecture, LisH spans 7-39 (SRFYTNLLIANYLKHNGLEDTLAAFIRETALPL).

This is an uncharacterized protein from Saccharomyces cerevisiae (strain ATCC 204508 / S288c) (Baker's yeast).